The chain runs to 298 residues: Protease HtpX homolog (298 aa).

2 helical membrane-spanning segments follow: residues 14–34 (VVLL…AGYL) and 39–59 (YAMG…SMIF). His-143 lines the Zn(2+) pocket. The active site involves Glu-144. His-147 contributes to the Zn(2+) binding site. 2 helical membrane passes run 158–178 (IAVA…RMLW) and 197–217 (IITL…ASLI). Zn(2+) is bound at residue Glu-226.

This sequence belongs to the peptidase M48B family. Zn(2+) serves as cofactor.

It is found in the cell membrane. The chain is Protease HtpX homolog from Streptococcus pyogenes serotype M1.